A 620-amino-acid chain; its full sequence is Nuclear cap-binding protein subunit 3 (620 aa).

K12 participates in a covalent cross-link: Glycyl lysine isopeptide (Lys-Gly) (interchain with G-Cter in SUMO2). The segment covering 15–28 (APAGPALGLPSPEA) has biased composition (low complexity). The segment at 15–42 (APAGPALGLPSPEAESGVDRGEPEPMEV) is disordered. Residue S25 is modified to Phosphoserine. K70 is covalently cross-linked (Glycyl lysine isopeptide (Lys-Gly) (interchain with G-Cter in SUMO2)). Residue S73 is modified to Phosphoserine. Residues 126–187 (ETIYICGVDE…MSSLPAQDKI (62 aa)) form an RNA recognition motif (RRM) domain region. The short motif at 155–158 (WLDD) is the WLDD motif; essential for 7-methylguanosine-containing mRNA cap binding element. A compositionally biased stretch (basic and acidic residues) spans 185 to 198 (DKIRSRDASEDKSA). Disordered regions lie at residues 185-233 (DKIR…LDTL), 332-419 (HSGL…PKKS), and 436-620 (IRNS…EAES). Residue K186 forms a Glycyl lysine isopeptide (Lys-Gly) (interchain with G-Cter in SUMO2) linkage. A phosphoserine mark is found at S209 and S210. Acidic residues-rich tracts occupy residues 209–230 (SSDD…DVEL) and 341–365 (EPIE…DMDA). Positions 366–388 (DDRVVVEYHEELPALKQPRERSA) are enriched in basic and acidic residues. The residue at position 413 (T413) is a Phosphothreonine. At S415 the chain carries Phosphoserine. Composition is skewed to basic and acidic residues over residues 459 to 474 (PPEK…DEKR) and 511 to 521 (VRREPSSDVHS). A Glycyl lysine isopeptide (Lys-Gly) (interchain with G-Cter in SUMO2) cross-link involves residue K541. Composition is skewed to basic and acidic residues over residues 554–569 (KTKE…RAPG) and 585–598 (IKEK…KSRL). Residues 611-620 (ESSSGSEAES) show a composition bias toward low complexity. Position 620 is a phosphoserine (S620).

It belongs to the NCBP3 family. Component of an alternative cap-binding complex (CBC) composed of NCBP1/CBP80 and NCBP3. Interacts with SRRT, KPNA3, THOC5 and EIF4A3.

Its subcellular location is the nucleus. The protein resides in the cytoplasm. Its function is as follows. Associates with NCBP1/CBP80 to form an alternative cap-binding complex (CBC) which plays a key role in mRNA export. NCBP3 serves as adapter protein linking the capped RNAs (m7GpppG-capped RNA) to NCBP1/CBP80. Unlike the conventional CBC with NCBP2 which binds both small nuclear RNA (snRNA) and messenger (mRNA) and is involved in their export from the nucleus, the alternative CBC with NCBP3 does not bind snRNA and associates only with mRNA thereby playing a role in only mRNA export. The alternative CBC is particularly important in cellular stress situations such as virus infections and the NCBP3 activity is critical to inhibit virus growth. The polypeptide is Nuclear cap-binding protein subunit 3 (Homo sapiens (Human)).